We begin with the raw amino-acid sequence, 332 residues long: Fructose-1,6-bisphosphatase class 1 (332 aa).

Mg(2+)-binding residues include glutamate 89, aspartate 110, leucine 112, and aspartate 113. Residues 113–116 (DGSS), asparagine 206, tyrosine 239, 257–259 (YLY), and lysine 269 contribute to the substrate site. Glutamate 275 lines the Mg(2+) pocket.

It belongs to the FBPase class 1 family. In terms of assembly, homotetramer. It depends on Mg(2+) as a cofactor.

Its subcellular location is the cytoplasm. The enzyme catalyses beta-D-fructose 1,6-bisphosphate + H2O = beta-D-fructose 6-phosphate + phosphate. The protein operates within carbohydrate biosynthesis; gluconeogenesis. The protein is Fructose-1,6-bisphosphatase class 1 of Salmonella arizonae (strain ATCC BAA-731 / CDC346-86 / RSK2980).